Reading from the N-terminus, the 364-residue chain is 3-dehydroquinate synthase (364 aa).

NAD(+) is bound by residues 73–78 (DGEQNK), 107–111 (GVIGD), 131–132 (TT), Lys-144, Lys-153, and 171–174 (CLCT). Zn(2+) contacts are provided by Glu-186, His-249, and His-266.

Belongs to the sugar phosphate cyclases superfamily. Dehydroquinate synthase family. It depends on NAD(+) as a cofactor. Co(2+) serves as cofactor. Zn(2+) is required as a cofactor.

It is found in the cytoplasm. It catalyses the reaction 7-phospho-2-dehydro-3-deoxy-D-arabino-heptonate = 3-dehydroquinate + phosphate. Its pathway is metabolic intermediate biosynthesis; chorismate biosynthesis; chorismate from D-erythrose 4-phosphate and phosphoenolpyruvate: step 2/7. Its function is as follows. Catalyzes the conversion of 3-deoxy-D-arabino-heptulosonate 7-phosphate (DAHP) to dehydroquinate (DHQ). The sequence is that of 3-dehydroquinate synthase from Blochmanniella floridana.